Reading from the N-terminus, the 152-residue chain is Probable histone H2A.3 (152 aa).

Disordered regions lie at residues 1 to 25 (MDASTKTTKKGAGGRKGGGPRKKSV) and 129 to 152 (KTERANTGGKEPKTTKAGKSPKKA). Residues 7-25 (TTKKGAGGRKGGGPRKKSV) show a composition bias toward basic residues. Residues 129-142 (KTERANTGGKEPKT) are compositionally biased toward basic and acidic residues. Positions 148 to 151 (SPKK) match the SPKK motif motif.

The protein belongs to the histone H2A family. The nucleosome is a histone octamer containing two molecules each of H2A, H2B, H3 and H4 assembled in one H3-H4 heterotetramer and two H2A-H2B heterodimers. The octamer wraps approximately 147 bp of DNA.

Its subcellular location is the nucleus. The protein localises to the chromosome. In terms of biological role, core component of nucleosome. Nucleosomes wrap and compact DNA into chromatin, limiting DNA accessibility to the cellular machineries which require DNA as a template. Histones thereby play a central role in transcription regulation, DNA repair, DNA replication and chromosomal stability. DNA accessibility is regulated via a complex set of post-translational modifications of histones, also called histone code, and nucleosome remodeling. This is Probable histone H2A.3 from Medicago truncatula (Barrel medic).